Consider the following 303-residue polypeptide: Protease HtpX homolog (303 aa).

The next 2 membrane-spanning stretches (helical) occupy residues 4 to 24 and 38 to 58; these read VVLFLLTNLAVIAVLSITARI and MGMLLAFAALIGFGGAFISLL. His-144 serves as a coordination point for Zn(2+). The active site involves Glu-145. His-148 is a binding site for Zn(2+). Helical transmembrane passes span 152 to 172 and 199 to 219; these read GDMVTLTLIQGVVNTFVIFLS and ISSIAFEIVFGVLASIVVMYF. Position 224 (Glu-224) interacts with Zn(2+).

Belongs to the peptidase M48B family. The cofactor is Zn(2+).

It localises to the cell inner membrane. This Chlorobium phaeobacteroides (strain BS1) protein is Protease HtpX homolog.